We begin with the raw amino-acid sequence, 209 residues long: Eukaryotic translation initiation factor 4E (209 aa).

This sequence belongs to the eukaryotic initiation factor 4E family. EIF4F is a multi-subunit complex, the composition of which varies with external and internal environmental conditions. It is composed of at least eIF4A, eIF4E and eIF4G. eIF4E is also known to interact with other partners.

Its function is as follows. Recognizes and binds the 7-methylguanosine-containing mRNA cap during an early step in the initiation of protein synthesis and facilitates ribosome binding by inducing the unwinding of the mRNAs secondary structures. This Candida glabrata (strain ATCC 2001 / BCRC 20586 / JCM 3761 / NBRC 0622 / NRRL Y-65 / CBS 138) (Yeast) protein is Eukaryotic translation initiation factor 4E (TIF45).